Here is a 459-residue protein sequence, read N- to C-terminus: tRNA modification GTPase MnmE (459 aa).

(6S)-5-formyl-5,6,7,8-tetrahydrofolate-binding residues include Arg-22, Glu-85, and Arg-124. Residues 221 to 380 (GLSTVIVGKP…LEIQIRDLFF (160 aa)) enclose the TrmE-type G domain. Asn-231 is a binding site for K(+). GTP contacts are provided by residues 231-236 (NVGKSS), 250-256 (TEVAGTT), and 275-278 (DTAG). Ser-235 contributes to the Mg(2+) binding site. Residues Thr-250, Val-252, and Thr-255 each coordinate K(+). Thr-256 lines the Mg(2+) pocket. (6S)-5-formyl-5,6,7,8-tetrahydrofolate is bound at residue Lys-459.

The protein belongs to the TRAFAC class TrmE-Era-EngA-EngB-Septin-like GTPase superfamily. TrmE GTPase family. Homodimer. Heterotetramer of two MnmE and two MnmG subunits. The cofactor is K(+).

The protein localises to the cytoplasm. Functionally, exhibits a very high intrinsic GTPase hydrolysis rate. Involved in the addition of a carboxymethylaminomethyl (cmnm) group at the wobble position (U34) of certain tRNAs, forming tRNA-cmnm(5)s(2)U34. The protein is tRNA modification GTPase MnmE of Staphylococcus aureus (strain Mu3 / ATCC 700698).